Consider the following 228-residue polypeptide: Phosphatidylserine decarboxylase proenzyme (228 aa).

Serine 197 (schiff-base intermediate with substrate; via pyruvic acid) is an active-site residue. Serine 197 is subject to Pyruvic acid (Ser); by autocatalysis.

Belongs to the phosphatidylserine decarboxylase family. PSD-A subfamily. Heterodimer of a large membrane-associated beta subunit and a small pyruvoyl-containing alpha subunit. Pyruvate is required as a cofactor. In terms of processing, is synthesized initially as an inactive proenzyme. Formation of the active enzyme involves a self-maturation process in which the active site pyruvoyl group is generated from an internal serine residue via an autocatalytic post-translational modification. Two non-identical subunits are generated from the proenzyme in this reaction, and the pyruvate is formed at the N-terminus of the alpha chain, which is derived from the carboxyl end of the proenzyme. The post-translation cleavage follows an unusual pathway, termed non-hydrolytic serinolysis, in which the side chain hydroxyl group of the serine supplies its oxygen atom to form the C-terminus of the beta chain, while the remainder of the serine residue undergoes an oxidative deamination to produce ammonia and the pyruvoyl prosthetic group on the alpha chain.

The protein resides in the cell membrane. It carries out the reaction a 1,2-diacyl-sn-glycero-3-phospho-L-serine + H(+) = a 1,2-diacyl-sn-glycero-3-phosphoethanolamine + CO2. The protein operates within phospholipid metabolism; phosphatidylethanolamine biosynthesis; phosphatidylethanolamine from CDP-diacylglycerol: step 2/2. Functionally, catalyzes the formation of phosphatidylethanolamine (PtdEtn) from phosphatidylserine (PtdSer). This Bacteroides fragilis (strain ATCC 25285 / DSM 2151 / CCUG 4856 / JCM 11019 / LMG 10263 / NCTC 9343 / Onslow / VPI 2553 / EN-2) protein is Phosphatidylserine decarboxylase proenzyme.